The chain runs to 407 residues: Polygalacturonase (407 aa).

The first 26 residues, 1-26, serve as a signal peptide directing secretion; it reads MAPHLNIVPSMFVLLLLFISASKVQP. PbH1 repeat units follow at residues 180 to 206 and 207 to 228; these read CKNI…HMGK and SEGV…SIGD. Residue Asn-182 is glycosylated (N-linked (GlcNAc...) asparagine). Asp-221 functions as the Proton donor in the catalytic mechanism. Residues Cys-223 and Cys-240 are joined by a disulfide bond. His-244 is a catalytic residue. PbH1 repeat units follow at residues 260–281 and 290–311; these read VEGI…RIKT and VSEI…LIDQ. 4 N-linked (GlcNAc...) asparagine glycosylation sites follow: Asn-267, Asn-272, Asn-302, and Asn-331. 2 disulfides stabilise this stretch: Cys-351-Cys-357 and Cys-379-Cys-395. One copy of the PbH1 5 repeat lies at 357–384; sequence CQNVELADIDIQHNGAEPATSQCLNVKP.

It belongs to the glycosyl hydrolase 28 family. In terms of tissue distribution, pollen.

The protein localises to the secreted. Its subcellular location is the cell wall. The enzyme catalyses (1,4-alpha-D-galacturonosyl)n+m + H2O = (1,4-alpha-D-galacturonosyl)n + (1,4-alpha-D-galacturonosyl)m.. Functionally, may function in the depolymerization of the pectin in its walls during pollen tube elongation, or in that of the pistil during pollination. The sequence is that of Polygalacturonase (G9) from Gossypium barbadense (Sea Island cotton).